Consider the following 175-residue polypeptide: Protein LpfE (175 aa).

An N-terminal signal peptide occupies residues 1–20; it reads MKNLHALMPACLLLTASAMA.

It belongs to the fimbrial protein family.

Its subcellular location is the fimbrium. The chain is Protein LpfE (lpfE) from Salmonella typhimurium (strain LT2 / SGSC1412 / ATCC 700720).